The sequence spans 357 residues: Aspartate-semialdehyde dehydrogenase (357 aa).

NADP(+) is bound by residues Thr12, Gly13, Thr14, Val15, Ser37, Ser40, Leu84, and Asp85. Cys151 serves as the catalytic Acyl-thioester intermediate. Gly183 provides a ligand contact to NADP(+). His247 serves as the catalytic Proton acceptor. At Ser323 the chain carries Phosphoserine. Asn335 is a binding site for NADP(+).

The protein belongs to the aspartate-semialdehyde dehydrogenase family.

The protein resides in the cytoplasm. It is found in the cytosol. Its subcellular location is the nucleus. It catalyses the reaction L-aspartate 4-semialdehyde + phosphate + NADP(+) = 4-phospho-L-aspartate + NADPH + H(+). The protein operates within amino-acid biosynthesis; L-methionine biosynthesis via de novo pathway; L-homoserine from L-aspartate: step 2/3. It participates in amino-acid biosynthesis; L-threonine biosynthesis; L-threonine from L-aspartate: step 2/5. In terms of biological role, catalyzes the NADPH-dependent formation of L-aspartate 4-semialdehyde (L-ASA) by the reductive dephosphorylation of 4-phospho-L-aspartate. Mediates the second step in the biosynthesis of amino acids that derive from aspartate (the aspartate family of amino acids), including methioinine and threonine, the latter of which is a precursor to isoleucine. The polypeptide is Aspartate-semialdehyde dehydrogenase (Schizosaccharomyces pombe (strain 972 / ATCC 24843) (Fission yeast)).